The chain runs to 339 residues: Foldase protein PrsA (339 aa).

Residues 1 to 26 (MKHLKNNTKKFTALLFALLFSMSIAG) form the signal peptide. A lipid anchor (N-palmitoyl cysteine) is attached at Cys-27. The S-diacylglycerol cysteine moiety is linked to residue Cys-27. The region spanning 197 to 287 (KPTFHAQHVL…FGYHVIKLID (91 aa)) is the PpiC domain.

It belongs to the PrsA family.

Its subcellular location is the cell membrane. The enzyme catalyses [protein]-peptidylproline (omega=180) = [protein]-peptidylproline (omega=0). Functionally, plays a major role in protein secretion by helping the post-translocational extracellular folding of several secreted proteins. The chain is Foldase protein PrsA from Clostridium tetani (strain Massachusetts / E88).